The sequence spans 271 residues: Phosphatidylinositol transfer protein beta isoform (271 aa).

The residue at position 215 (lysine 215) is an N6-acetyllysine. Serine 262 is modified (phosphoserine; by PKC).

Belongs to the PtdIns transfer protein family. PI transfer class I subfamily. In terms of processing, constitutive phosphorylation of Ser-262 has no effect on phospholipid transfer activity but is required for Golgi targeting.

The protein resides in the golgi apparatus. The protein localises to the golgi apparatus membrane. It is found in the endoplasmic reticulum membrane. The catalysed reaction is a 1,2-diacyl-sn-glycero-3-phosphocholine(in) = a 1,2-diacyl-sn-glycero-3-phosphocholine(out). It catalyses the reaction a 1,2-diacyl-sn-glycero-3-phospho-(1D-myo-inositol)(in) = a 1,2-diacyl-sn-glycero-3-phospho-(1D-myo-inositol)(out). The enzyme catalyses an N-(acyl)-sphingosylphosphocholine(in) = an N-(acyl)-sphingosylphosphocholine(out). In terms of biological role, catalyzes the transfer of phosphatidylinositol, phosphatidylcholine and sphingomyelin between membranes. Required for COPI-mediated retrograde transport from the Golgi to the endoplasmic reticulum; phosphatidylinositol and phosphatidylcholine transfer activity is essential for this function. The protein is Phosphatidylinositol transfer protein beta isoform (Pitpnb) of Mus musculus (Mouse).